The sequence spans 346 residues: Probable galacturonosyltransferase-like 6 (346 aa).

Residues 1-21 (MLWITRFAGLFSAAMAVIVLS) form a helical; Signal-anchor for type II membrane protein membrane-spanning segment. Residues 22–346 (PSLQSFPPAA…TPYDLYRHSH (325 aa)) lie on the Lumenal side of the membrane. Asparagine 203 carries N-linked (GlcNAc...) asparagine glycosylation.

Belongs to the glycosyltransferase 8 family.

Its subcellular location is the golgi apparatus membrane. It participates in glycan metabolism; pectin biosynthesis. In terms of biological role, may be involved in pectin and/or xylans biosynthesis in cell walls. This Arabidopsis thaliana (Mouse-ear cress) protein is Probable galacturonosyltransferase-like 6 (GATL6).